Consider the following 58-residue polypeptide: Small ribosomal subunit protein bS21 (58 aa).

The tract at residues E39–F58 is disordered. Over residues V43 to F58 the composition is skewed to basic residues.

It belongs to the bacterial ribosomal protein bS21 family.

This is Small ribosomal subunit protein bS21 from Streptococcus pneumoniae (strain ATCC BAA-255 / R6).